A 71-amino-acid polypeptide reads, in one-letter code: U-scoloptoxin(21)-Sm1a (71 aa).

Positions 1 to 21 are cleaved as a signal peptide; it reads MKSVIFALFLVYLLIVRAAEA. Positions 45-71 are disordered; sequence IELANDPNGPGRRRRAPAENEDFLKHS. Basic and acidic residues predominate over residues 60 to 71; the sequence is APAENEDFLKHS.

Belongs to the scoloptoxin-21 family. As to expression, expressed by the venom gland.

Its subcellular location is the secreted. In Scolopendra morsitans (Tanzanian blue ringleg centipede), this protein is U-scoloptoxin(21)-Sm1a.